Consider the following 134-residue polypeptide: Cytochrome b5 (134 aa).

The region spanning 6–82 (TKTFTRAEVA…MKKYKIGELV (77 aa)) is the Cytochrome b5 heme-binding domain. Heme-binding residues include H41 and H65. Positions 86 to 105 (RTSVAQKSEPTWSTEQQTEE) are disordered. Over residues 87–105 (TSVAQKSEPTWSTEQQTEE) the composition is skewed to polar residues. The chain crosses the membrane as a helical span at residues 111–131 (WLVPLVLCLVATLFYKFFFGG).

Belongs to the cytochrome b5 family.

Its subcellular location is the endoplasmic reticulum membrane. The protein resides in the microsome membrane. In terms of biological role, cytochrome b5 is a membrane-bound hemoprotein which functions as an electron carrier for several membrane-bound oxygenases. The chain is Cytochrome b5 (Cyt-b5) from Drosophila melanogaster (Fruit fly).